A 689-amino-acid polypeptide reads, in one-letter code: Glycine--tRNA ligase beta subunit (689 aa).

Belongs to the class-II aminoacyl-tRNA synthetase family. As to quaternary structure, tetramer of two alpha and two beta subunits.

It is found in the cytoplasm. The catalysed reaction is tRNA(Gly) + glycine + ATP = glycyl-tRNA(Gly) + AMP + diphosphate. In Shewanella sp. (strain W3-18-1), this protein is Glycine--tRNA ligase beta subunit.